The sequence spans 529 residues: Beta-hexosaminidase subunit alpha (529 aa).

Residues 1–22 (MAGSTLRFSLLLAAAFAGRATA) form the signal peptide. A propeptide spanning residues 23–88 (LWPWPQYIQT…RFPHPIEKRH (66 aa)) is cleaved from the precursor. Cysteines 58 and 104 form a disulfide. Residues Asn115, Asn157, and Asn295 are each glycosylated (N-linked (GlcNAc...) asparagine). Cys277 and Cys328 form a disulfide bridge. Glu323 serves as the catalytic Proton donor. Residues 423-424 (NH) are critical for hydrolysis GM2 gangliosides. Cys505 and Cys522 are oxidised to a cystine.

This sequence belongs to the glycosyl hydrolase 20 family. As to quaternary structure, there are 3 beta-hexosaminidase isozymes: isozyme A (hexosaminidase A) is a heterodimer composed of one subunit alpha and one subunit beta (chain A and B); isozyme B (hexosaminidase B) is a homodimer of two beta subunits (two chains A and B); isozyme S (hexosaminidase S) is a homodimer of two alpha subunits. The composition of the dimer (isozyme A versus isozyme S) has a significant effect on the substrate specificity of the alpha subunit active site.

Its subcellular location is the lysosome. The enzyme catalyses Hydrolysis of terminal non-reducing N-acetyl-D-hexosamine residues in N-acetyl-beta-D-hexosaminides.. It carries out the reaction N-acetyl-beta-D-galactosaminyl-(1-&gt;4)-beta-D-3-sulfogalactosyl-(1-&gt;4)-beta-D-glucosyl-(1&lt;-&gt;1')-ceramide + H2O = a beta-D-3-sulfogalactosyl-(1-&gt;4)-beta-D-glucosyl-(1&lt;-&gt;1')-ceramide + N-acetyl-beta-D-galactosamine. The catalysed reaction is a ganglioside GM2 (d18:1(4E)) + H2O = a ganglioside GM3 (d18:1(4E)) + N-acetyl-beta-D-galactosamine. It catalyses the reaction a ganglioside GM2 + H2O = a ganglioside GM3 + N-acetyl-beta-D-galactosamine. The enzyme catalyses beta-D-GalNAc-(1-&gt;4)-alpha-L-IdoA-(1-&gt;3)-beta-D-GalNAc-4-sulfate-(1-&gt;4)-alpha-L-IdoA-(1-&gt;3)-D-GalNAc-4-sulfate + H2O = alpha-L-IdoA-(1-&gt;3)-beta-D-GalNAc-4-sulfate-(1-&gt;4)-alpha-L-IdoA-(1-&gt;3)-D-GalNAc-4-sulfate + N-acetyl-D-galactosamine. It carries out the reaction N-acetyl-beta-D-6-sulfogalactosaminyl-(1-&gt;4)-alpha-L-iduronyl-(1-&gt;3)-N-acetyl-D-6-sulfogalactosamine + H2O = alpha-L-iduronyl-(1-&gt;3)-N-acetyl-D-6-sulfogalactosamine + N-acetyl-D-6-sulfogalactosamine. Its activity is regulated as follows. Addition of GM2A stimulates the hydrolysis of sulfated glycosphingolipid SM2 and the ganglioside GM2. Hydrolyzes the non-reducing end N-acetyl-D-hexosamine and/or sulfated N-acetyl-D-hexosamine of glycoconjugates, such as the oligosaccharide moieties from proteins and neutral glycolipids, or from certain mucopolysaccharides. The isozyme S is as active as the isozyme A on the anionic bis-sulfated glycans, the chondroitin-6-sulfate trisaccharide (C6S-3), and the dermatan sulfate pentasaccharide, and the sulfated glycosphingolipid SM2. The isozyme B does not hydrolyze each of these substrates, however hydrolyzes efficiently neutral oligosaccharide. Only the isozyme A is responsible for the degradation of GM2 gangliosides in the presence of GM2A. The polypeptide is Beta-hexosaminidase subunit alpha (Bos taurus (Bovine)).